Here is a 403-residue protein sequence, read N- to C-terminus: Argininosuccinate synthase (403 aa).

ATP-binding positions include 13 to 21 (AYSGGLDTS) and alanine 40. L-citrulline is bound by residues tyrosine 92 and serine 97. Glycine 122 contacts ATP. L-aspartate-binding residues include threonine 124, asparagine 128, and aspartate 129. Residue asparagine 128 participates in L-citrulline binding. L-citrulline contacts are provided by arginine 132, serine 181, serine 190, glutamate 266, and tyrosine 278.

This sequence belongs to the argininosuccinate synthase family. Type 1 subfamily. As to quaternary structure, homotetramer.

Its subcellular location is the cytoplasm. It carries out the reaction L-citrulline + L-aspartate + ATP = 2-(N(omega)-L-arginino)succinate + AMP + diphosphate + H(+). It functions in the pathway amino-acid biosynthesis; L-arginine biosynthesis; L-arginine from L-ornithine and carbamoyl phosphate: step 2/3. The protein is Argininosuccinate synthase of Aliivibrio fischeri (strain ATCC 700601 / ES114) (Vibrio fischeri).